The sequence spans 267 residues: Thiamine pyrophosphokinase 3 (267 aa).

It belongs to the thiamine pyrophosphokinase family.

Its subcellular location is the cytoplasm. The protein localises to the cytosol. It catalyses the reaction thiamine + ATP = thiamine diphosphate + AMP + H(+). It participates in cofactor biosynthesis; thiamine diphosphate biosynthesis; thiamine diphosphate from thiamine: step 1/1. Functionally, catalyzes the phosphorylation of thiamine to thiamine pyrophosphate (TPP). TPP is an active cofactor for enzymes involved in glycolysis and energy production. Plant leaves require high levels of TPP for photosynthesis and carbohydrate metabolism. This is Thiamine pyrophosphokinase 3 (TPK3) from Oryza sativa subsp. japonica (Rice).